Consider the following 201-residue polypeptide: 3-isopropylmalate dehydratase small subunit (201 aa).

Belongs to the LeuD family. LeuD type 1 subfamily. As to quaternary structure, heterodimer of LeuC and LeuD.

It carries out the reaction (2R,3S)-3-isopropylmalate = (2S)-2-isopropylmalate. It participates in amino-acid biosynthesis; L-leucine biosynthesis; L-leucine from 3-methyl-2-oxobutanoate: step 2/4. Functionally, catalyzes the isomerization between 2-isopropylmalate and 3-isopropylmalate, via the formation of 2-isopropylmaleate. This Brucella abortus (strain S19) protein is 3-isopropylmalate dehydratase small subunit.